The chain runs to 371 residues: MALETFVNSEPFTFGVELEIQVVNTHNYDLTKAASDLMRLIQGETFPGNITPEITESMIELSTGICHSHEQAVSELHAIRDVLVKAADQLNVGLCGGGTHAFQQWSDRQIYDAPRFQYISELYGYLAKQFTVFGQHVHIGCPDPDSALFLLHSMSRFIPHFIALSASSPFVQNVDTGFHSARLNSVFAFPLSGRAPFVLTWDSFEEYFTKMVNTGVVNSMKDFYWDIRPKPGYGTIEVRVMDTPLSVDRAAAIACYIQTLARYLLTDRPLKLSEDDYLVYTFNRFEACRFGLEGTCVNPQTGERRTIAEDILDTLDRIAPHAAALGSRAALDEIGALAKARVNDASWLRTVFKQEKSLNETVRQQCLRWRE.

It belongs to the glutamate--cysteine ligase type 2 family. YbdK subfamily.

The enzyme catalyses L-cysteine + L-glutamate + ATP = gamma-L-glutamyl-L-cysteine + ADP + phosphate + H(+). ATP-dependent carboxylate-amine ligase which exhibits weak glutamate--cysteine ligase activity. This Burkholderia ambifaria (strain MC40-6) protein is Putative glutamate--cysteine ligase 2.